The chain runs to 657 residues: L-glutamate oxidase precursor (657 aa).

A signal peptide spans 1–12 (MTETPRDNSATR). FAD is bound by residues Glu86, Ala87, Arg95, Met120, Arg121, Met350, Glu639, Trp647, and Ile648.

Belongs to the flavin monoamine oxidase family. LGOX subfamily. As to quaternary structure, the mature enzyme is a heterohexamer composed of 2 alpha chains, 2 beta chains and 2 gamma chains (alpha2beta2gamma2). The cofactor is FAD. Post-translationally, the precursor form is proteolytically cleaved by an endopeptidase into alpha, beta and gamma chains, which form the stable mature enzyme.

Its subcellular location is the secreted. It catalyses the reaction L-glutamate + O2 + H2O = H2O2 + 2-oxoglutarate + NH4(+). With respect to regulation, proteinase K-treated enzyme exhibits improved affinity for the substrate, increased activity and increased thermostability. Functionally, catalyzes the oxidative deamination of L-glutamate to 2-ketoglutarate along with the production of ammonia and hydrogen peroxide. Exhibits strict specificity for L-glutamate, and shows only very weak activity with L-glutamine. The protein is L-glutamate oxidase precursor of Streptomyces diastatochromogenes.